A 342-amino-acid chain; its full sequence is Phomopsin biosynthesis cluster protein B' (342 aa).

A disordered region spans residues 1 to 22; it reads MESIAKAKSLPNKGRTYDSQRP. The helical transmembrane segment at 87–107 threads the bilayer; it reads VLIIGCAVISLFAIIGALGFA. The segment at 118–186 is disordered; the sequence is CASPAHQNPH…QCGESPDEAQ (69 aa). Residues 144 to 155 show a composition bias toward low complexity; sequence HSGSHSSSSSTN. Asn-248 carries N-linked (GlcNAc...) asparagine glycosylation.

The protein resides in the membrane. Its function is as follows. Part of the gene cluster that mediates the biosynthesis of the phomopsins, a group of hexapeptide mycotoxins which infects lupins and causes lupinosis disease in livestock. The role of phomB' within the phomopsins biosynthesis pathway has still to be determined. The pathway starts with the processing of the precursor phomA by several endopeptidases including kexin proteases as well as the cluster-specific S41 family peptidase phomP1 and the oligopeptidase phomG to produce 10 identical copies of the hexapeptide Tyr-Val-Ile-Pro-Ile-Asp. After being excised from the precursor peptide, the core peptides are cyclized and modified post-translationally by enzymes encoded within the gene cluster. The timing and order of proteolysis of the phomA precursor and PTMs are still unknown. Two tyrosinase-like enzymes, phomQ1 and phomQ2, catalyze the chlorination and hydroxylation of Tyr, respectively. PhomYb, is proposed to be involved in the construction of the macrocyclic structure. The other 4 ustYa family proteins may be involved in PTMs that generate the unique structure of phomopsin A. PhomYa is required for the hydroxylation of C-beta of Tyr. PhomYc, phomYd, and phomYe are responsible for the biosynthesis of 2,3-dehydroisoleucine (dIle), 2,3-dehydroaspartic acid (dAsp), and 3,4-dehydroproline (dPro), respectively. While dIle formation by phomYc is indispensable for the installation of dAsp by phomYd, the order of the other PTMs have not been elucidated yet. Most of the biosynthetic enzymes likely have broad substrate specificity, and thus, there might be a metabolic grid from a precursor to phomopsin A. The enzyme(s) responsible for the biosynthesis of 3,4-dehydrovaline (dVal) have also not been identified yet. Finally, phomM acts as an S-adenosylmethionine-dependent alpha-N-methyltransferase that catalyzes two successive N-methylation reactions, converting N-desmethyl-phomopsin A to phomopsin A and phomopsin A further to an N,N-dimethylated congener called phomopsin E. This is Phomopsin biosynthesis cluster protein B' from Diaporthe leptostromiformis (Lupinosis disease fungus).